Consider the following 447-residue polypeptide: ATP-dependent protease ATPase subunit HslU (447 aa).

Residues Ile-17, 59–64 (GVGKTE), Asp-256, Glu-321, and Arg-393 contribute to the ATP site.

This sequence belongs to the ClpX chaperone family. HslU subfamily. In terms of assembly, a double ring-shaped homohexamer of HslV is capped on each side by a ring-shaped HslU homohexamer. The assembly of the HslU/HslV complex is dependent on binding of ATP.

It is found in the cytoplasm. In terms of biological role, ATPase subunit of a proteasome-like degradation complex; this subunit has chaperone activity. The binding of ATP and its subsequent hydrolysis by HslU are essential for unfolding of protein substrates subsequently hydrolyzed by HslV. HslU recognizes the N-terminal part of its protein substrates and unfolds these before they are guided to HslV for hydrolysis. This chain is ATP-dependent protease ATPase subunit HslU, found in Pseudomonas putida (strain W619).